Consider the following 334-residue polypeptide: Large ribosomal subunit protein uL3 (334 aa).

Residues 1-10 (MGMKKNRPRR) are compositionally biased toward basic residues. The tract at residues 1 to 21 (MGMKKNRPRRGSLAFSPRKRA) is disordered.

Belongs to the universal ribosomal protein uL3 family. In terms of assembly, part of the 50S ribosomal subunit. Forms a cluster with proteins L14 and L24e.

Functionally, one of the primary rRNA binding proteins, it binds directly near the 3'-end of the 23S rRNA, where it nucleates assembly of the 50S subunit. The sequence is that of Large ribosomal subunit protein uL3 from Methanococcus vannielii (strain ATCC 35089 / DSM 1224 / JCM 13029 / OCM 148 / SB).